Reading from the N-terminus, the 177-residue chain is Ribonuclease alpha-sarcin (177 aa).

The N-terminal stretch at 1–27 (MVAIKNLVLVALTAVTALAVPSPLEAR) is a signal peptide. Intrachain disulfides connect C33/C175 and C103/C159. The active site involves H77. A disordered region spans residues 86–119 (DGKLPKGRTPIKFGKSDCDRPPKHSKDGNGKTDH). The segment covering 99 to 119 (GKSDCDRPPKHSKDGNGKTDH) has biased composition (basic and acidic residues). E123 (proton acceptor) is an active-site residue. The Proton donor role is filled by H164.

This sequence belongs to the ribonuclease U2 family.

It is found in the secreted. The catalysed reaction is a 28S rRNA containing guanosine-adenosine pair + H2O = an [RNA fragment]-3'-adenosine-3'-phosphate + a 5'-a hydroxy-guanosine-3'-[RNA fragment].. Its function is as follows. Alpha-sarcin is specific for purines in both single- and double-stranded RNA. Its toxic action on eukaryotic cells is the result of cleavage of a single phosphodiester bond in the 60S subunit of ribosomes. Inhibits both the EFl (elongation factor 1)-dependent binding of aminoacyl-tRNA and the GTP-dependent binding of EF2 (elongation factor 2) to ribosomes. This Aspergillus giganteus protein is Ribonuclease alpha-sarcin (sar).